Here is a 426-residue protein sequence, read N- to C-terminus: L-cysteine:1D-myo-inositol 2-amino-2-deoxy-alpha-D-glucopyranoside ligase (426 aa).

Cys-43 is a Zn(2+) binding site. L-cysteinyl-5'-AMP-binding positions include Cys-43–Thr-46, Ser-58, and Asn-81–Thr-83. The 'HIGH' region signature appears at Ile-45 to His-55. Residues Glu-200 to Pro-205 carry the 'ERGGDP' region motif. Residue Trp-241 participates in L-cysteinyl-5'-AMP binding. Position 245 (Cys-245) interacts with Zn(2+). An L-cysteinyl-5'-AMP-binding site is contributed by Gly-263–Asp-265. A Zn(2+)-binding site is contributed by His-270. Val-296 lines the L-cysteinyl-5'-AMP pocket. The short motif at Lys-302–Ser-306 is the 'KMSKS' region element.

This sequence belongs to the class-I aminoacyl-tRNA synthetase family. MshC subfamily. In terms of assembly, monomer. It depends on Zn(2+) as a cofactor.

It catalyses the reaction 1D-myo-inositol 2-amino-2-deoxy-alpha-D-glucopyranoside + L-cysteine + ATP = 1D-myo-inositol 2-(L-cysteinylamino)-2-deoxy-alpha-D-glucopyranoside + AMP + diphosphate + H(+). In terms of biological role, catalyzes the ATP-dependent condensation of GlcN-Ins and L-cysteine to form L-Cys-GlcN-Ins. This Arthrobacter sp. (strain FB24) protein is L-cysteine:1D-myo-inositol 2-amino-2-deoxy-alpha-D-glucopyranoside ligase.